A 369-amino-acid chain; its full sequence is Putative cyclin-F1-1 (369 aa).

The tract at residues 328–350 (AQHHLESKPAGAAGVGINSSGDD) is disordered.

Belongs to the cyclin family. Cyclin F subfamily.

The chain is Putative cyclin-F1-1 (CYCF1-1) from Oryza sativa subsp. japonica (Rice).